Reading from the N-terminus, the 28-residue chain is M-poneritoxin-Da4b (28 aa).

Ala28 bears the Alanine amide mark.

As to expression, expressed by the venom gland.

It localises to the secreted. Its function is as follows. The synthetic peptide has antimicrobial activity against the Gram-positive bacteria B.amyloliquefacies S499 (MIC=0.05 mM), L.monocytogenes 2231 and S.aureus ATCC 29213, against the Gram-negative bacteria P.putida BTP1, P.aeruginosa PaO1 and E.coli ATCC 10536, and against the fungi S.cerevisiae, R.mucilaginosa and C.cucumerinum. It is not active against the fungi F.oxysporum and B.cinerea. In Dinoponera australis (Giant neotropical hunting ant), this protein is M-poneritoxin-Da4b.